A 92-amino-acid chain; its full sequence is Small ribosomal subunit protein uS19 (92 aa).

The protein belongs to the universal ribosomal protein uS19 family.

Functionally, protein S19 forms a complex with S13 that binds strongly to the 16S ribosomal RNA. The chain is Small ribosomal subunit protein uS19 from Macrococcus caseolyticus (strain JCSC5402) (Macrococcoides caseolyticum).